Here is a 272-residue protein sequence, read N- to C-terminus: 3-methyl-2-oxobutanoate hydroxymethyltransferase (272 aa).

Positions 42 and 86 each coordinate Mg(2+). 3-methyl-2-oxobutanoate-binding positions include 42-43, D86, and K116; that span reads DS. Position 118 (E118) interacts with Mg(2+). The Proton acceptor role is filled by E185.

The protein belongs to the PanB family. Homodecamer; pentamer of dimers. The cofactor is Mg(2+).

The protein localises to the cytoplasm. The catalysed reaction is 3-methyl-2-oxobutanoate + (6R)-5,10-methylene-5,6,7,8-tetrahydrofolate + H2O = 2-dehydropantoate + (6S)-5,6,7,8-tetrahydrofolate. The protein operates within cofactor biosynthesis; (R)-pantothenate biosynthesis; (R)-pantoate from 3-methyl-2-oxobutanoate: step 1/2. Its function is as follows. Catalyzes the reversible reaction in which hydroxymethyl group from 5,10-methylenetetrahydrofolate is transferred onto alpha-ketoisovalerate to form ketopantoate. The sequence is that of 3-methyl-2-oxobutanoate hydroxymethyltransferase from Prochlorococcus marinus (strain NATL1A).